The primary structure comprises 457 residues: DNA repair protein RadA (457 aa).

The C4-type zinc-finger motif lies at Cys10 to Cys27. Residue Gly97–Ser104 participates in ATP binding. Positions Lys254–Gly258 match the RadA KNRFG motif motif. Residues Asp353 to Arg457 are lon-protease-like.

It belongs to the RecA family. RadA subfamily.

Functionally, DNA-dependent ATPase involved in processing of recombination intermediates, plays a role in repairing DNA breaks. Stimulates the branch migration of RecA-mediated strand transfer reactions, allowing the 3' invading strand to extend heteroduplex DNA faster. Binds ssDNA in the presence of ADP but not other nucleotides, has ATPase activity that is stimulated by ssDNA and various branched DNA structures, but inhibited by SSB. Does not have RecA's homology-searching function. In Halalkalibacterium halodurans (strain ATCC BAA-125 / DSM 18197 / FERM 7344 / JCM 9153 / C-125) (Bacillus halodurans), this protein is DNA repair protein RadA.